The primary structure comprises 205 residues: Golgi to ER traffic protein 1 (205 aa).

Residues 1–3 (MDY) lie on the Lumenal side of the membrane. Residues 4–24 (WILLVLAFLVADKSWHLTGLL) traverse the membrane as a helical segment. Residues 25 to 96 (ATKLTSPERL…ATKARLAKLK (72 aa)) lie on the Cytoplasmic side of the membrane. A coiled-coil region spans residues 32–96 (ERLQQLIRER…ATKARLAKLK (65 aa)). Residues 97-117 (LLVVTVPFTALKFYKGKLPVY) form a helical membrane-spanning segment. Topologically, residues 118–156 (ALPKGMFPRFIEGTLEHGWLYMALAPLNMKQFSEGASVA) are lumenal. The helical transmembrane segment at 157–173 (VSLGIWLFALLRVLGAI) threads the bilayer. Residues 174–205 (EFVLETLREQNPQVATETAKVHARTAQAASAN) lie on the Cytoplasmic side of the membrane.

The protein belongs to the WRB/GET1 family. Component of the Golgi to ER traffic (GET) complex, which is composed of GET1, GET2 and GET3. Within the complex, GET1 and GET2 form a heterotetramer which is stabilized by phosphatidylinositol binding and which binds to the GET3 homodimer.

Its subcellular location is the endoplasmic reticulum membrane. The protein resides in the golgi apparatus membrane. Its function is as follows. Required for the post-translational delivery of tail-anchored (TA) proteins to the endoplasmic reticulum. Together with GET2, acts as a membrane receptor for soluble GET3, which recognizes and selectively binds the transmembrane domain of TA proteins in the cytosol. The GET complex cooperates with the HDEL receptor ERD2 to mediate the ATP-dependent retrieval of resident ER proteins that contain a C-terminal H-D-E-L retention signal from the Golgi to the ER. This chain is Golgi to ER traffic protein 1, found in Eremothecium gossypii (strain ATCC 10895 / CBS 109.51 / FGSC 9923 / NRRL Y-1056) (Yeast).